A 176-amino-acid chain; its full sequence is Peroxynitrite isomerase 1 (176 aa).

The interval 1 to 23 (MDENSTLSPAHSDAAASSSANTP) is disordered. The span at 8 to 20 (SPAHSDAAASSSA) shows a compositional bias: low complexity. The short motif at 37 to 43 (GLWRGEG) is the GXWXGXG element. H168 serves as a coordination point for heme b.

This sequence belongs to the nitrobindin family. In terms of assembly, homodimer. The cofactor is heme b.

It carries out the reaction peroxynitrite = nitrate. The protein operates within nitrogen metabolism. Functionally, heme-binding protein able to scavenge peroxynitrite and to protect free L-tyrosine against peroxynitrite-mediated nitration, by acting as a peroxynitrite isomerase that converts peroxynitrite to nitrate. Therefore, this protein likely plays a role in peroxynitrite sensing and in the detoxification of reactive nitrogen and oxygen species (RNS and ROS, respectively). Is able to bind nitric oxide (NO) in vitro, but may act as a sensor of peroxynitrite levels in vivo. In Rhodococcus jostii (strain RHA1), this protein is Peroxynitrite isomerase 1.